A 97-amino-acid polypeptide reads, in one-letter code: uncharacterized protein (97 aa).

This is an uncharacterized protein from Orgyia pseudotsugata multicapsid polyhedrosis virus (OpMNPV).